The primary structure comprises 276 residues: Protein FAM151B (276 aa).

This sequence belongs to the menorin family.

Its function is as follows. Essential for survival of retinal photoreceptor cells. The sequence is that of Protein FAM151B (FAM151B) from Homo sapiens (Human).